Here is a 338-residue protein sequence, read N- to C-terminus: Anthranilate phosphoribosyltransferase (338 aa).

5-phospho-alpha-D-ribose 1-diphosphate contacts are provided by residues G80, 83–84 (GD), T88, 90–93 (NIST), 108–116 (KHGNRAMSS), and S120. G80 is a binding site for anthranilate. S92 is a binding site for Mg(2+). Position 111 (N111) interacts with anthranilate. R166 is an anthranilate binding site. The Mg(2+) site is built by D225 and E226.

It belongs to the anthranilate phosphoribosyltransferase family. As to quaternary structure, homodimer. Requires Mg(2+) as cofactor.

It carries out the reaction N-(5-phospho-beta-D-ribosyl)anthranilate + diphosphate = 5-phospho-alpha-D-ribose 1-diphosphate + anthranilate. It functions in the pathway amino-acid biosynthesis; L-tryptophan biosynthesis; L-tryptophan from chorismate: step 2/5. In terms of biological role, catalyzes the transfer of the phosphoribosyl group of 5-phosphorylribose-1-pyrophosphate (PRPP) to anthranilate to yield N-(5'-phosphoribosyl)-anthranilate (PRA). The polypeptide is Anthranilate phosphoribosyltransferase (Herpetosiphon aurantiacus (strain ATCC 23779 / DSM 785 / 114-95)).